A 313-amino-acid chain; its full sequence is Ribosomal RNA small subunit methyltransferase H (313 aa).

S-adenosyl-L-methionine contacts are provided by residues 35–37, D55, F80, D102, and Q109; that span reads GGH.

It belongs to the methyltransferase superfamily. RsmH family.

Its subcellular location is the cytoplasm. It catalyses the reaction cytidine(1402) in 16S rRNA + S-adenosyl-L-methionine = N(4)-methylcytidine(1402) in 16S rRNA + S-adenosyl-L-homocysteine + H(+). Specifically methylates the N4 position of cytidine in position 1402 (C1402) of 16S rRNA. In Shewanella loihica (strain ATCC BAA-1088 / PV-4), this protein is Ribosomal RNA small subunit methyltransferase H.